The chain runs to 438 residues: Ribosomal protein uS12 methylthiotransferase RimO (438 aa).

The 115-residue stretch at 1 to 115 (MKYFILSLGC…LDKLLADLGE (115 aa)) folds into the MTTase N-terminal domain. Residues Cys10, Cys46, Cys78, Cys150, Cys154, and Cys157 each coordinate [4Fe-4S] cluster. The Radical SAM core domain maps to 136–366 (KSNEVYRYIK…MEVQQEISLN (231 aa)). The 69-residue stretch at 369–437 (KALVGKKIPV…IYDLKGEFIN (69 aa)) folds into the TRAM domain.

Belongs to the methylthiotransferase family. RimO subfamily. The cofactor is [4Fe-4S] cluster.

It localises to the cytoplasm. The enzyme catalyses L-aspartate(89)-[ribosomal protein uS12]-hydrogen + (sulfur carrier)-SH + AH2 + 2 S-adenosyl-L-methionine = 3-methylsulfanyl-L-aspartate(89)-[ribosomal protein uS12]-hydrogen + (sulfur carrier)-H + 5'-deoxyadenosine + L-methionine + A + S-adenosyl-L-homocysteine + 2 H(+). Catalyzes the methylthiolation of an aspartic acid residue of ribosomal protein uS12. The protein is Ribosomal protein uS12 methylthiotransferase RimO of Carboxydothermus hydrogenoformans (strain ATCC BAA-161 / DSM 6008 / Z-2901).